Reading from the N-terminus, the 268-residue chain is Tryptophan synthase alpha chain (268 aa).

Catalysis depends on proton acceptor residues glutamate 49 and aspartate 60.

This sequence belongs to the TrpA family. As to quaternary structure, tetramer of two alpha and two beta chains.

The enzyme catalyses (1S,2R)-1-C-(indol-3-yl)glycerol 3-phosphate + L-serine = D-glyceraldehyde 3-phosphate + L-tryptophan + H2O. Its pathway is amino-acid biosynthesis; L-tryptophan biosynthesis; L-tryptophan from chorismate: step 5/5. Its function is as follows. The alpha subunit is responsible for the aldol cleavage of indoleglycerol phosphate to indole and glyceraldehyde 3-phosphate. The protein is Tryptophan synthase alpha chain of Haemophilus influenzae (strain ATCC 51907 / DSM 11121 / KW20 / Rd).